Here is a 283-residue protein sequence, read N- to C-terminus: Phosphate import ATP-binding protein PstB (283 aa).

The segment covering 1-20 (MAQTLAQTKQISQSHTFDVS) has biased composition (polar residues). The disordered stretch occupies residues 1–32 (MAQTLAQTKQISQSHTFDVSQSHHKTPDDTNS). The ABC transporter domain maps to 37–278 (YSTQNLDLWY…PSNKKTEDYI (242 aa)). Residue 69–76 (GPSGCGKS) coordinates ATP.

Belongs to the ABC transporter superfamily. Phosphate importer (TC 3.A.1.7) family. In terms of assembly, the complex is composed of two ATP-binding proteins (PstB), two transmembrane proteins (PstC and PstA) and a solute-binding protein (PstS).

Its subcellular location is the cell membrane. It catalyses the reaction phosphate(out) + ATP + H2O = ADP + 2 phosphate(in) + H(+). Its function is as follows. Part of the ABC transporter complex PstSACB involved in phosphate import. Responsible for energy coupling to the transport system. The polypeptide is Phosphate import ATP-binding protein PstB (Staphylococcus aureus (strain USA300)).